The chain runs to 134 residues: MSTEPDWMADVVFDADGLIPAIAQDAENGQILMVAWMNRESLAETAATGRAVYWSRSRKKLWRKGEESGHAQQVHELRLDCDGDVILLKVHQNGGIACHTGRASCFYRRLDGTSQRAAWVTVDPVLKDPELIYK.

Aspartate 80 is a binding site for Mg(2+). Cysteine 81 is a Zn(2+) binding site. Mg(2+)-binding residues include aspartate 82 and aspartate 84. Residues cysteine 98 and cysteine 105 each coordinate Zn(2+).

This sequence belongs to the PRA-CH family. Homodimer. Mg(2+) is required as a cofactor. The cofactor is Zn(2+).

Its subcellular location is the cytoplasm. The enzyme catalyses 1-(5-phospho-beta-D-ribosyl)-5'-AMP + H2O = 1-(5-phospho-beta-D-ribosyl)-5-[(5-phospho-beta-D-ribosylamino)methylideneamino]imidazole-4-carboxamide. The protein operates within amino-acid biosynthesis; L-histidine biosynthesis; L-histidine from 5-phospho-alpha-D-ribose 1-diphosphate: step 3/9. Its function is as follows. Catalyzes the hydrolysis of the adenine ring of phosphoribosyl-AMP. The chain is Phosphoribosyl-AMP cyclohydrolase from Bordetella avium (strain 197N).